The following is a 249-amino-acid chain: Triosephosphate isomerase (249 aa).

Position 9–11 (9–11 (NWK)) interacts with substrate. Catalysis depends on histidine 94, which acts as the Electrophile. Residue glutamate 166 is the Proton acceptor of the active site. Residues glycine 172 and 232-233 (GG) contribute to the substrate site.

Belongs to the triosephosphate isomerase family. In terms of assembly, homodimer.

It is found in the cytoplasm. It carries out the reaction D-glyceraldehyde 3-phosphate = dihydroxyacetone phosphate. The protein operates within carbohydrate biosynthesis; gluconeogenesis. It functions in the pathway carbohydrate degradation; glycolysis; D-glyceraldehyde 3-phosphate from glycerone phosphate: step 1/1. Its function is as follows. Involved in the gluconeogenesis. Catalyzes stereospecifically the conversion of dihydroxyacetone phosphate (DHAP) to D-glyceraldehyde-3-phosphate (G3P). In Xylella fastidiosa (strain M12), this protein is Triosephosphate isomerase.